The sequence spans 282 residues: Probable endonuclease 4 (282 aa).

Residues His-66, His-106, Glu-143, Asp-177, His-180, His-214, Asp-227, His-229, and Glu-259 each contribute to the Zn(2+) site.

The protein belongs to the AP endonuclease 2 family. Zn(2+) serves as cofactor.

The enzyme catalyses Endonucleolytic cleavage to 5'-phosphooligonucleotide end-products.. Functionally, endonuclease IV plays a role in DNA repair. It cleaves phosphodiester bonds at apurinic or apyrimidinic (AP) sites, generating a 3'-hydroxyl group and a 5'-terminal sugar phosphate. This chain is Probable endonuclease 4, found in Nitratidesulfovibrio vulgaris (strain DP4) (Desulfovibrio vulgaris).